Here is an 82-residue protein sequence, read N- to C-terminus: MVTIRLARHGAKKRPFYQVVVTDSRNARNGRFIERVGFFNPIASEKEEGTRLDLDRIAHWVGQGATISDRVAALIKEVKKAA.

It belongs to the bacterial ribosomal protein bS16 family.

The polypeptide is Small ribosomal subunit protein bS16 (Salmonella agona (strain SL483)).